The chain runs to 439 residues: GTPase Der (439 aa).

2 EngA-type G domains span residues 4–168 (PIVA…KDDE) and 177–352 (INIA…DNYT). Residues 10-17 (GRPNVGKS), 57-61 (DTGGI), 120-123 (NKID), 183-190 (GKPNVGKS), 230-234 (DTAGL), and 295-298 (NKWD) contribute to the GTP site. A KH-like domain is found at 353-437 (KRVKTGVLND…GIKTEFRERK (85 aa)).

Belongs to the TRAFAC class TrmE-Era-EngA-EngB-Septin-like GTPase superfamily. EngA (Der) GTPase family. In terms of assembly, associates with the 50S ribosomal subunit.

In terms of biological role, GTPase that plays an essential role in the late steps of ribosome biogenesis. The sequence is that of GTPase Der from Clostridium botulinum (strain Loch Maree / Type A3).